A 341-amino-acid polypeptide reads, in one-letter code: Glycerol-3-phosphate dehydrogenase [NAD(P)+] (341 aa).

NADPH-binding residues include Ser-17, Trp-18, Arg-37, and Lys-112. The sn-glycerol 3-phosphate site is built by Lys-112 and Gly-140. Ala-144 lines the NADPH pocket. 5 residues coordinate sn-glycerol 3-phosphate: Lys-195, Asp-248, Ser-258, Arg-259, and Asn-260. Residue Lys-195 is the Proton acceptor of the active site. Residue Arg-259 coordinates NADPH. Residues Val-283 and Glu-285 each coordinate NADPH.

The protein belongs to the NAD-dependent glycerol-3-phosphate dehydrogenase family.

Its subcellular location is the cytoplasm. It carries out the reaction sn-glycerol 3-phosphate + NAD(+) = dihydroxyacetone phosphate + NADH + H(+). The catalysed reaction is sn-glycerol 3-phosphate + NADP(+) = dihydroxyacetone phosphate + NADPH + H(+). Its pathway is membrane lipid metabolism; glycerophospholipid metabolism. Functionally, catalyzes the reduction of the glycolytic intermediate dihydroxyacetone phosphate (DHAP) to sn-glycerol 3-phosphate (G3P), the key precursor for phospholipid synthesis. The sequence is that of Glycerol-3-phosphate dehydrogenase [NAD(P)+] from Mycobacterium avium (strain 104).